Here is a 771-residue protein sequence, read N- to C-terminus: MMDALRVLLETSTFNEVLRGLAISILLAKLTQSTTSSSKSQGSTFITASGFILIYFFARSWLALVNHYAPEPYLDEVFHIPQAQTYCEGRYHEWDNKITTPPGLYLLSVGWHKLVRLVECTPSSLRSNNLVATLLIALIALSCRRRIEAQTAVGIEKSAVSFYAYHTAINIALFPVIFFFSGLYYTDVASTLVMLVAYWNHLNRVASHSEKPGFLNGLWTVVLGVAALFMRQTNVFWVVVYMGGLEAAHVVKGLKPKPVSKNDTPDFVLENIRDSFGFWLRRYAVGDVHDPPVDMAWPDDWALCLLSIGIAALCNPLRVLRQVWPHITIMGLFAGFVAWNGGVVLGDKSNHIATIHLPQMLYIWPFFAFFSAPLLIPRVLSTLADLITHARTPTPSHTTTKDPGRSSWRFTKPSITSKKSSTTKPPQRSGPTPASSSSSSSSFSPDTNSSGRGFRFILDLVLSRKLYYPFYLLATILLSAAIIHYNTIIHPFTLADNRHYMFYIFRYTILRSSLVRLALVAAYTLSRWLIWKRLEGNNPPLRDLAGETGLKITKNKLGWRDEFSASPFVTQDFYGPKTIKTDEQKNIKDKQKEVEEEEEEEEKEDWLIGGAYTTLSLSSTQPSPATSSPPTSTVLLWLLTTTLSLVTAPLVEPRYFILPWVFYRLLVPAMPVSSSLVSSSSSSSFASSTTESGNGDGNDAATAARQQQNGNGKRGLLWNIIRRTDAALALETVWFLAINIGTMYMFLFKPFYWKTASGEMLDGGRLQRFMW.

A run of 7 helical transmembrane segments spans residues 45 to 65 (FITA…LALV), 160 to 180 (VSFY…IFFF), 182 to 202 (GLYY…WNHL), 221 to 241 (VVLG…VVVY), 293 to 313 (VDMA…IAAL), 326 to 346 (HITI…VVLG), and 357 to 377 (LPQM…LLIP). The interval 392-449 (TPTPSHTTTKDPGRSSWRFTKPSITSKKSSTTKPPQRSGPTPASSSSSSSSFSPDTNS) is disordered. Low complexity-rich tracts occupy residues 411–426 (TKPS…TKPP) and 435–449 (SSSS…DTNS). Residue asparagine 448 is glycosylated (N-linked (GlcNAc...) asparagine). 2 helical membrane passes run 469–489 (PFYL…NTII) and 503–525 (YIFR…AYTL). Residues 584–593 (QKNIKDKQKE) are compositionally biased toward basic and acidic residues. The tract at residues 584-605 (QKNIKDKQKEVEEEEEEEEKED) is disordered. The segment covering 594–604 (VEEEEEEEEKE) has biased composition (acidic residues). 2 helical membrane passes run 631–651 (TSTV…APLV) and 656–676 (FILP…SSSL). The disordered stretch occupies residues 682 to 708 (SSSFASSTTESGNGDGNDAATAARQQQ). Residues 728–748 (LALETVWFLAINIGTMYMFLF) form a helical membrane-spanning segment.

Belongs to the ALG10 glucosyltransferase family.

The protein localises to the endoplasmic reticulum membrane. It carries out the reaction an alpha-D-Glc-(1-&gt;3)-alpha-D-Glc-(1-&gt;3)-alpha-D-Man-(1-&gt;2)-alpha-D-Man-(1-&gt;2)-alpha-D-Man-(1-&gt;3)-[alpha-D-Man-(1-&gt;2)-alpha-D-Man-(1-&gt;3)-[alpha-D-Man-(1-&gt;2)-alpha-D-Man-(1-&gt;6)]-alpha-D-Man-(1-&gt;6)]-beta-D-Man-(1-&gt;4)-beta-D-GlcNAc-(1-&gt;4)-alpha-D-GlcNAc-diphospho-di-trans,poly-cis-dolichol + a di-trans,poly-cis-dolichyl beta-D-glucosyl phosphate = a alpha-D-Glc-(1-&gt;2)-alpha-D-Glc-(1-&gt;3)-alpha-D-Glc-(1-&gt;3)-alpha-D-Man-(1-&gt;2)-alpha-D-Man-(1-&gt;2)-alpha-D-Man-(1-&gt;3)-[alpha-D-Man-(1-&gt;2)-alpha-D-Man-(1-&gt;3)-[alpha-D-Man-(1-&gt;2)-alpha-D-Man-(1-&gt;6)]-alpha-D-Man-(1-&gt;6)]-beta-D-Man-(1-&gt;4)-beta-D-GlcNAc-(1-&gt;4)-alpha-D-GlcNAc-diphospho-di-trans,poly-cis-dolichol + a di-trans,poly-cis-dolichyl phosphate + H(+). It participates in protein modification; protein glycosylation. Dol-P-Glc:Glc(2)Man(9)GlcNAc(2)-PP-Dol alpha-1,2-glucosyltransferase that operates in the biosynthetic pathway of dolichol-linked oligosaccharides, the glycan precursors employed in protein asparagine (N)-glycosylation. The assembly of dolichol-linked oligosaccharides begins on the cytosolic side of the endoplasmic reticulum membrane and finishes in its lumen. The sequential addition of sugars to dolichol pyrophosphate produces dolichol-linked oligosaccharides containing fourteen sugars, including two GlcNAcs, nine mannoses and three glucoses. Once assembled, the oligosaccharide is transferred from the lipid to nascent proteins by oligosaccharyltransferases. In the lumen of the endoplasmic reticulum, adds the third and last glucose residue from dolichyl phosphate glucose (Dol-P-Glc) onto the lipid-linked oligosaccharide intermediate Glc(2)Man(9)GlcNAc(2)-PP-Dol to produce Glc(3)Man(9)GlcNAc(2)-PP-Dol. The polypeptide is Dol-P-Glc:Glc(2)Man(9)GlcNAc(2)-PP-Dol alpha-1,2-glucosyltransferase (alg-10) (Neurospora crassa (strain ATCC 24698 / 74-OR23-1A / CBS 708.71 / DSM 1257 / FGSC 987)).